Here is a 219-residue protein sequence, read N- to C-terminus: Probable GTP-binding protein EngB (219 aa).

The region spanning 24 to 207 (VQPEIAFAGR…HELIESWLRP (184 aa)) is the EngB-type G domain. GTP contacts are provided by residues 32–39 (GRSNAGKS), 59–63 (GRTQH), 81–84 (DLPG), 148–151 (TKCD), and 186–188 (FSA). The Mg(2+) site is built by Ser-39 and Thr-61.

This sequence belongs to the TRAFAC class TrmE-Era-EngA-EngB-Septin-like GTPase superfamily. EngB GTPase family. Mg(2+) serves as cofactor.

Its function is as follows. Necessary for normal cell division and for the maintenance of normal septation. This Burkholderia cenocepacia (strain HI2424) protein is Probable GTP-binding protein EngB.